The primary structure comprises 878 residues: Phosphoenolpyruvate carboxylase (878 aa).

Active-site residues include histidine 140 and lysine 545.

It belongs to the PEPCase type 1 family. It depends on Mg(2+) as a cofactor.

It carries out the reaction oxaloacetate + phosphate = phosphoenolpyruvate + hydrogencarbonate. Forms oxaloacetate, a four-carbon dicarboxylic acid source for the tricarboxylic acid cycle. The sequence is that of Phosphoenolpyruvate carboxylase from Pseudomonas syringae pv. syringae (strain B728a).